Here is a 181-residue protein sequence, read N- to C-terminus: ATP-dependent protease subunit HslV (181 aa).

The active site involves threonine 7. Na(+)-binding residues include glycine 166, cysteine 169, and threonine 172.

Belongs to the peptidase T1B family. HslV subfamily. In terms of assembly, a double ring-shaped homohexamer of HslV is capped on each side by a ring-shaped HslU homohexamer. The assembly of the HslU/HslV complex is dependent on binding of ATP.

The protein resides in the cytoplasm. The enzyme catalyses ATP-dependent cleavage of peptide bonds with broad specificity.. Its activity is regulated as follows. Allosterically activated by HslU binding. In terms of biological role, protease subunit of a proteasome-like degradation complex believed to be a general protein degrading machinery. This is ATP-dependent protease subunit HslV from Delftia acidovorans (strain DSM 14801 / SPH-1).